The primary structure comprises 143 residues: Nucleoside diphosphate kinase (143 aa).

Positions 11, 59, 87, 93, 104, and 114 each coordinate ATP. Catalysis depends on His-117, which acts as the Pros-phosphohistidine intermediate.

The protein belongs to the NDK family. As to quaternary structure, homotetramer. Requires Mg(2+) as cofactor.

The protein resides in the cytoplasm. The enzyme catalyses a 2'-deoxyribonucleoside 5'-diphosphate + ATP = a 2'-deoxyribonucleoside 5'-triphosphate + ADP. It catalyses the reaction a ribonucleoside 5'-diphosphate + ATP = a ribonucleoside 5'-triphosphate + ADP. In terms of biological role, major role in the synthesis of nucleoside triphosphates other than ATP. The ATP gamma phosphate is transferred to the NDP beta phosphate via a ping-pong mechanism, using a phosphorylated active-site intermediate. The chain is Nucleoside diphosphate kinase from Psychrobacter cryohalolentis (strain ATCC BAA-1226 / DSM 17306 / VKM B-2378 / K5).